The sequence spans 226 residues: Aspartyl protease inhibitor (226 aa).

The N-terminal stretch at 1–15 is a signal peptide; sequence MKLLFLCALIALTAA. Disordered stretches follow at residues 95–116 and 196–218; these read GKKG…KKPS and EAKQ…QPNV. Residues C131 and C222 are joined by a disulfide bond.

This sequence belongs to the protease inhibitor I33 family.

It is found in the secreted. Its function is as follows. Aspartyl protease inhibitor. This Parelaphostrongylus tenuis (Meningeal worm) protein is Aspartyl protease inhibitor.